The following is a 156-amino-acid chain: Transcriptional repressor NrdR (156 aa).

A zinc finger lies at 3-34; that stretch reads CPKCNSTHSRVVDSRHADEVNAIRRRRECEEC. Residues 49 to 139 enclose the ATP-cone domain; sequence LIVVKKDGTR…VYKEFKDVDQ (91 aa).

Belongs to the NrdR family. Requires Zn(2+) as cofactor.

Negatively regulates transcription of bacterial ribonucleotide reductase nrd genes and operons by binding to NrdR-boxes. The chain is Transcriptional repressor NrdR from Staphylococcus saprophyticus subsp. saprophyticus (strain ATCC 15305 / DSM 20229 / NCIMB 8711 / NCTC 7292 / S-41).